The sequence spans 515 residues: Mucin-like protein Glc1.8a (515 aa).

The N-terminal stretch at 1-20 (MSQITLIILILAIGFSCTKS) is a signal peptide. The Extracellular segment spans residues 21–467 (HPINSTRDGE…ANDIKKPAFP (447 aa)). N-linked (GlcNAc...) asparagine; by host glycosylation is found at Asn24, Asn45, Asn51, Asn60, Asn85, Asn93, Asn102, Asn123, Asn129, Asn138, Asn180, Asn201, Asn207, Asn216, Asn258, Asn279, Asn285, Asn319, Asn327, Asn336, Asn357, Asn363, Asn372, Asn397, Asn405, Asn413, Asn434, and Asn441. A disordered region spans residues 80–114 (SKKDENITGQSEINTSAKSQPINSTRDGEDSGTDL). The segment covering 86 to 104 (ITGQSEINTSAKSQPINST) has biased composition (polar residues). The interval 314–358 (SKKDENVTGQSEINTSAKSQPINSTRDGEDSGTDLKNLLTDPANT) is disordered. Polar residues predominate over residues 320-338 (VTGQSEINTSAKSQPINST). The disordered stretch occupies residues 393-413 (RKDENVTGQSEFNISTNSNLN). Residues 468–488 (YCIILITFQIVTVGMIIYLVF) form a helical membrane-spanning segment. The Cytoplasmic segment spans residues 489–515 (RTMRKPCQSERAIPLNTFGFGNNSSHE).

It belongs to the polydnaviridae Glc1.8 protein family.

The protein localises to the host membrane. Involved in suppression of the insect cellular immune response. Inhibits host hemocyte adhesion and phagocytosis. The polypeptide is Mucin-like protein Glc1.8a (O9) (Microplitis demolitor (Parasitoid wasp)).